Here is a 216-residue protein sequence, read N- to C-terminus: DNA replication complex GINS protein PSF3 (216 aa).

The interval 1 to 16 is not essential for folding and stability of GINS complex, but may regulate accessibility to the central complex pore; sequence MSEAYFRVESGALGPE.

It belongs to the GINS3/PSF3 family. In terms of assembly, component of the GINS complex which is a heterotetramer of GINS1, GINS2, GINS3 and GINS4. Forms a stable subcomplex with GINS2. GINS complex interacts with DNA primase in vitro. Component of the CMG helicase complex, a hexameric ring of related MCM2-7 subunits stabilized by CDC45 and the tetrameric GINS complex.

Its subcellular location is the nucleus. It is found in the chromosome. In terms of biological role, required for correct functioning of the GINS complex, a complex that plays an essential role in the initiation of DNA replication, and progression of DNA replication forks. GINS complex is a core component of CDC45-MCM-GINS (CMG) helicase, the molecular machine that unwinds template DNA during replication, and around which the replisome is built. The polypeptide is DNA replication complex GINS protein PSF3 (GINS3) (Bos taurus (Bovine)).